A 22-amino-acid chain; its full sequence is Brain peptide MVPVPVHHMADELLRNGPDTVI (22 aa).

In Apis mellifera (Honeybee), this protein is Brain peptide MVPVPVHHMADELLRNGPDTVI.